The primary structure comprises 148 residues: UPF0178 protein Mlg_1612 (148 aa).

It belongs to the UPF0178 family.

The polypeptide is UPF0178 protein Mlg_1612 (Alkalilimnicola ehrlichii (strain ATCC BAA-1101 / DSM 17681 / MLHE-1)).